The following is a 91-amino-acid chain: MKLAVTLTLVTLALCCSSASAEICPSFQRVIETLLMDTPSSYEAAMELFSPDQDMREAGAQLKKLVDTLPQKPRESIIKLMEKIAQSSLCN.

Residues 1–21 (MKLAVTLTLVTLALCCSSASA) form the signal peptide.

It belongs to the secretoglobin family. As to quaternary structure, antiparallel homodimer; disulfide-linked. Interaction with LMBR1L has been observed in PubMed:16423471, but not in PubMed:23964685. Club cells (nonciliated cells of the surface epithelium of the pulmonary airways).

It is found in the secreted. In terms of biological role, binds phosphatidylcholine, phosphatidylinositol, polychlorinated biphenyls (PCB) and weakly progesterone, potent inhibitor of phospholipase A2. This Homo sapiens (Human) protein is Uteroglobin (SCGB1A1).